The following is an 87-amino-acid chain: DNA-directed RNA polymerase subunit Rpo5 (87 aa).

The protein belongs to the archaeal Rpo5/eukaryotic RPB5 RNA polymerase subunit family. Part of the RNA polymerase complex.

Its subcellular location is the cytoplasm. It catalyses the reaction RNA(n) + a ribonucleoside 5'-triphosphate = RNA(n+1) + diphosphate. Its function is as follows. DNA-dependent RNA polymerase (RNAP) catalyzes the transcription of DNA into RNA using the four ribonucleoside triphosphates as substrates. The polypeptide is DNA-directed RNA polymerase subunit Rpo5 (Thermoplasma acidophilum (strain ATCC 25905 / DSM 1728 / JCM 9062 / NBRC 15155 / AMRC-C165)).